The following is a 253-amino-acid chain: Snake venom serine protease homolog HS120 (253 aa).

The N-terminal stretch at 1-18 (MVLIRVIANLLILQLSYA) is a signal peptide. Positions 19–24 (QKSSEL) are excised as a propeptide. One can recognise a Peptidase S1 domain in the interval 25-244 (VIGGDECNIN…YLPWIQSIIA (220 aa)). Cystine bridges form between Cys31–Cys158, Cys49–Cys65, Cys98–Cys251, Cys137–Cys205, Cys169–Cys184, and Cys195–Cys220. N-linked (GlcNAc...) asparagine glycosylation is found at Asn116 and Asn165.

It belongs to the peptidase S1 family. Snake venom subfamily. In terms of tissue distribution, expressed by the venom gland.

It is found in the secreted. Functionally, snake venom serine protease homolog that may act in the hemostasis system of the prey. The protein is Snake venom serine protease homolog HS120 of Bothrops jararaca (Jararaca).